Reading from the N-terminus, the 116-residue chain is Ribosome-binding factor A (116 aa).

The protein belongs to the RbfA family. In terms of assembly, monomer. Binds 30S ribosomal subunits, but not 50S ribosomal subunits or 70S ribosomes.

Its subcellular location is the cytoplasm. In terms of biological role, one of several proteins that assist in the late maturation steps of the functional core of the 30S ribosomal subunit. Associates with free 30S ribosomal subunits (but not with 30S subunits that are part of 70S ribosomes or polysomes). Required for efficient processing of 16S rRNA. May interact with the 5'-terminal helix region of 16S rRNA. In Streptococcus pyogenes serotype M3 (strain SSI-1), this protein is Ribosome-binding factor A.